The chain runs to 356 residues: Peptide chain release factor 1 (356 aa).

At Gln230 the chain carries N5-methylglutamine. Basic and acidic residues predominate over residues 279 to 289 (ALDSARSEARK). Residues 279–299 (ALDSARSEARKSQVGSGDRSE) form a disordered region.

The protein belongs to the prokaryotic/mitochondrial release factor family. Post-translationally, methylated by PrmC. Methylation increases the termination efficiency of RF1.

Its subcellular location is the cytoplasm. Functionally, peptide chain release factor 1 directs the termination of translation in response to the peptide chain termination codons UAG and UAA. The polypeptide is Peptide chain release factor 1 (prfA) (Caulobacter vibrioides (strain ATCC 19089 / CIP 103742 / CB 15) (Caulobacter crescentus)).